Consider the following 89-residue polypeptide: Small ribosomal subunit protein uS15 (89 aa).

It belongs to the universal ribosomal protein uS15 family. As to quaternary structure, part of the 30S ribosomal subunit. Forms a bridge to the 50S subunit in the 70S ribosome, contacting the 23S rRNA.

In terms of biological role, one of the primary rRNA binding proteins, it binds directly to 16S rRNA where it helps nucleate assembly of the platform of the 30S subunit by binding and bridging several RNA helices of the 16S rRNA. Forms an intersubunit bridge (bridge B4) with the 23S rRNA of the 50S subunit in the ribosome. The chain is Small ribosomal subunit protein uS15 from Bartonella bacilliformis (strain ATCC 35685 / KC583 / Herrer 020/F12,63).